A 180-amino-acid chain; its full sequence is Signal peptidase complex subunit 3 (180 aa).

At 1–12 (MHNLLSRANSLL) the chain is on the cytoplasmic side. The helical; Signal-anchor for type II membrane protein transmembrane segment at 13–33 (AFTLWVMAAVTAACFLSTVFL) threads the bilayer. Residues 34-180 (DYTVSNHLEV…PTTYTTTRRS (147 aa)) are Lumenal-facing. Residue asparagine 141 is glycosylated (N-linked (GlcNAc...) asparagine).

Belongs to the SPCS3 family. As to quaternary structure, component of the signal peptidase complex (SPC) composed of a catalytic subunit sec-11 and three accessory subunits spcs-1, spcs-2 and spcs-3. The complex induces a local thinning of the ER membrane which is used to measure the length of the signal peptide (SP) h-region of protein substrates. This ensures the selectivity of the complex towards h-regions shorter than 18-20 amino acids.

It localises to the endoplasmic reticulum membrane. Functionally, essential component of the signal peptidase complex (SPC) which catalyzes the cleavage of N-terminal signal sequences from nascent proteins as they are translocated into the lumen of the endoplasmic reticulum. Essential for the SPC catalytic activity, possibly by stabilizing and positioning the active center of the complex close to the lumenal surface. This chain is Signal peptidase complex subunit 3, found in Caenorhabditis briggsae.